A 122-amino-acid chain; its full sequence is Small ribosomal subunit protein uS13 (122 aa).

The interval 92 to 122 (HRMGLPVRGQRTKTNARTRKGPSKPVSGKKK) is disordered. Over residues 101–122 (QRTKTNARTRKGPSKPVSGKKK) the composition is skewed to basic residues.

The protein belongs to the universal ribosomal protein uS13 family. As to quaternary structure, part of the 30S ribosomal subunit. Forms a loose heterodimer with protein S19. Forms two bridges to the 50S subunit in the 70S ribosome.

Functionally, located at the top of the head of the 30S subunit, it contacts several helices of the 16S rRNA. In the 70S ribosome it contacts the 23S rRNA (bridge B1a) and protein L5 of the 50S subunit (bridge B1b), connecting the 2 subunits; these bridges are implicated in subunit movement. Contacts the tRNAs in the A and P-sites. This Ruminiclostridium cellulolyticum (strain ATCC 35319 / DSM 5812 / JCM 6584 / H10) (Clostridium cellulolyticum) protein is Small ribosomal subunit protein uS13.